Consider the following 672-residue polypeptide: DNA ligase (672 aa).

NAD(+)-binding positions include 32 to 36 (DEKYD), 82 to 83 (SL), and Glu-113. Lys-115 serves as the catalytic N6-AMP-lysine intermediate. Positions 136, 173, 290, and 314 each coordinate NAD(+). Zn(2+) is bound by residues Cys-408, Cys-411, Cys-427, and Cys-433. The region spanning 592–672 (DNNNTLFRKK…EFLNIINVYL (81 aa)) is the BRCT domain.

It belongs to the NAD-dependent DNA ligase family. LigA subfamily. Mg(2+) is required as a cofactor. It depends on Mn(2+) as a cofactor.

The catalysed reaction is NAD(+) + (deoxyribonucleotide)n-3'-hydroxyl + 5'-phospho-(deoxyribonucleotide)m = (deoxyribonucleotide)n+m + AMP + beta-nicotinamide D-nucleotide.. Functionally, DNA ligase that catalyzes the formation of phosphodiester linkages between 5'-phosphoryl and 3'-hydroxyl groups in double-stranded DNA using NAD as a coenzyme and as the energy source for the reaction. It is essential for DNA replication and repair of damaged DNA. The sequence is that of DNA ligase from Buchnera aphidicola subsp. Baizongia pistaciae (strain Bp).